We begin with the raw amino-acid sequence, 119 residues long: Large ribosomal subunit protein bL20 (119 aa).

Belongs to the bacterial ribosomal protein bL20 family.

Functionally, binds directly to 23S ribosomal RNA and is necessary for the in vitro assembly process of the 50S ribosomal subunit. It is not involved in the protein synthesizing functions of that subunit. This chain is Large ribosomal subunit protein bL20, found in Neisseria gonorrhoeae (strain ATCC 700825 / FA 1090).